Reading from the N-terminus, the 670-residue chain is Solute carrier organic anion transporter family member 1A5 (670 aa).

Residues 1 to 20 (MGETEKRVATHEVRCFSKIK) lie on the Cytoplasmic side of the membrane. Residues 21–40 (MFLLALTWAYVSKSLSGIYM) form a helical membrane-spanning segment. Residues 41 to 59 (NTMLTQIERQFDIPTSIVG) lie on the Extracellular side of the membrane. The chain crosses the membrane as a helical span at residues 60–80 (FINGSFEIGNLLLIIFVSYFG). Topologically, residues 81-86 (TKLHRP) are cytoplasmic. The helical transmembrane segment at 87–111 (IMIGVGCVIMGLGCFLMSLPHFLMG) threads the bilayer. The Extracellular segment spans residues 112 to 155 (RYEYETTISPTSNLSSNSFLCMENRSQTLKPTQDPAECIKEMKS). N-linked (GlcNAc...) asparagine glycans are attached at residues N124 and N135. A helical transmembrane segment spans residues 156-184 (LMWIYVLVGNIIRGIGETPIMPLGISYIE). Topologically, residues 185–203 (DFAKSENSPLYIGILETGK) are cytoplasmic. Residues 204–224 (VFGPIVGLLLGSFCASIYVDT) traverse the membrane as a helical segment. At 225–242 (GSVNTDDLTITPTDTRWV) the chain is on the extracellular side. The helical transmembrane segment at 243 to 267 (GAWWIGFLICAGVNILSSIPFFFFP) threads the bilayer. Over 268–311 (KTLPKEGLQDDVDGTNNDKEEKHREKAKEENRGITKDFLPFMKS) the chain is Cytoplasmic. A helical membrane pass occupies residues 312–333 (LSCNPIYMLLILTSVLQINAFI). Residues 334–353 (NMFTFLPKYLEQQYGKSTAE) are Extracellular-facing. A helical transmembrane segment spans residues 354–377 (VVLLIGVYNLPPICIGYLLIGFIM). At 378–381 (KKFK) the chain is on the cytoplasmic side. A helical transmembrane segment spans residues 382–405 (ITVKKAAYMAFCLSLFEYLLYFLH). At 406 to 513 (FMITCDNFPV…PECANKLQYF (108 aa)) the chain is on the extracellular side. The Kazal-like domain occupies 433–488 (NKVLADCNRGCSCSTNSWDPVCGDNGLAYMSACLAGCKKSVGTGTNMVFQNCSCIR). 3 cysteine pairs are disulfide-bonded: C439/C469, C445/C465, and C454/C486. N-linked (GlcNAc...) asparagine glycans are attached at residues N483 and N492. A helical membrane pass occupies residues 514–536 (LIMSVIGSFIYSITAIPGYMVLL). The Cytoplasmic portion of the chain corresponds to 537–545 (RCIKPEEKS). Residues 546 to 571 (LGIGLHAFCTRVFAGIPAPIYFGALI) traverse the membrane as a helical segment. The Extracellular segment spans residues 572–605 (DRTCLHWGTLKCGEPGACRMYNINNFRRIYLVLP). Residues 606–623 (AALRGSSYLPALFILILM) traverse the membrane as a helical segment. The Cytoplasmic segment spans residues 624–670 (RKFQFPGEIDSSETELAEMKITVKKSECTDVHGSPQVENDGELKTRL).

It belongs to the organo anion transporter (TC 2.A.60) family. Highly expressed in the kidney, moderately abundant in the retina, and even lower in the liver. Expressed (at protein level) in the small intestine. Expressed at lower levels in brain,lung, and retina.

Its subcellular location is the cell membrane. It is found in the basal cell membrane. The enzyme catalyses taurocholate(out) = taurocholate(in). It catalyses the reaction glycocholate(out) = glycocholate(in). It carries out the reaction taurochenodeoxycholate(out) = taurochenodeoxycholate(in). The catalysed reaction is tauroursodeoxycholate(out) = tauroursodeoxycholate(in). The enzyme catalyses 3,3',5'-triiodo-L-thyronine(out) = 3,3',5'-triiodo-L-thyronine(in). It catalyses the reaction L-thyroxine(out) = L-thyroxine(in). It carries out the reaction taurodeoxycholate(out) = taurodeoxycholate(in). The catalysed reaction is glycodeoxycholate(out) = glycodeoxycholate(in). The enzyme catalyses glycochenodeoxycholate(out) = glycochenodeoxycholate(in). It catalyses the reaction glycoursodeoxycholate(out) = glycoursodeoxycholate(in). It carries out the reaction estrone 3-sulfate(out) = estrone 3-sulfate(in). The catalysed reaction is prostaglandin E2(out) = prostaglandin E2(in). The enzyme catalyses substance P(out) = substance P(in). In terms of biological role, na(+)-independent transporter that mediates the cellular uptake of a broad range of organic anions such as the endogenous bile salts cholate and deoxycholate, either in their unconjugated or conjugated forms (taurocholate and glycocholate), estrone 3-sulfate and prostaglandin E2, at the plasma membrane. Responsible for intestinal absorption of bile acids. Capable of thyroid hormone transport (both T3 or 3,3',5'-triiodo-L-thyronine, and T4 or L-tyroxine). Plays roles in blood-brain and -cerebrospinal fluid barrier transport of organic anions and signal mediators, and in hormone uptake by neural cells. May also play a role in the reuptake of neuropeptides such as substance P/TAC1 and vasoactive intestinal peptide/VIP released from retinal neurons. Shows a pH-sensitive substrate specificity which may be ascribed to the protonation state of the binding site and leads to a stimulation of substrate transport in an acidic microenvironment. Hydrogencarbonate/HCO3(-) acts as the probable counteranion that exchanges for organic anions. May contribute to regulate the transport of organic compounds in testis across the blood-testis-barrier. This is Solute carrier organic anion transporter family member 1A5 (Slco1a5) from Rattus norvegicus (Rat).